The following is a 598-amino-acid chain: Elongation factor 4 (598 aa).

One can recognise a tr-type G domain in the interval 2–184; sequence QHIRNFSIIA…TVVRRVPPPK (183 aa). Residues 14 to 19 and 131 to 134 each bind GTP; these read DHGKST and NKID.

The protein belongs to the TRAFAC class translation factor GTPase superfamily. Classic translation factor GTPase family. LepA subfamily.

The protein resides in the cell inner membrane. The enzyme catalyses GTP + H2O = GDP + phosphate + H(+). Functionally, required for accurate and efficient protein synthesis under certain stress conditions. May act as a fidelity factor of the translation reaction, by catalyzing a one-codon backward translocation of tRNAs on improperly translocated ribosomes. Back-translocation proceeds from a post-translocation (POST) complex to a pre-translocation (PRE) complex, thus giving elongation factor G a second chance to translocate the tRNAs correctly. Binds to ribosomes in a GTP-dependent manner. The protein is Elongation factor 4 of Aromatoleum aromaticum (strain DSM 19018 / LMG 30748 / EbN1) (Azoarcus sp. (strain EbN1)).